A 441-amino-acid chain; its full sequence is MKLFDTLTQEQKNINKEVINIYSCGPTIYDYIHIGNARPIILMDTLIRFLESEGIKVNFLQNITDIDDKIIEKAIQENKTEKEITDKYLSAFLQNLKDLKIRMPDKLIPISEKISEMNLFIDDLVKLEAAYNVDGDVYFDIQKFSDEYGKLSNKKINDLISGNRVEIEDKKNNPLDFSVWKKTEKGITFDSNFGKGRPGWHTECALLIDEYFKGETIDIHSGGIDLQFPHHENERIQFIAKHGKEISDIWVHNGHLTINGEKMSKSLGNTMTLTNFLANYNSDILRWIFLTTYYKQPLNINDDLIEQANKFIQKINNLSKKIKQLLIENKFVKTNQFDEEIIKQFKIHMKNDLNTSRVLTLLEDTLKDINKLSTLKEFDDLFLKINSLNYILKTLGLSININTFVSDEEQNLFLLWKKIVSEKDFEKADEIRKVLISKGIL.

Residue Cys24 coordinates Zn(2+). The 'HIGH' region motif lies at 26–36 (PTIYDYIHIGN). Cys204, His230, and Glu234 together coordinate Zn(2+). Residues 262 to 266 (KMSKS) carry the 'KMSKS' region motif. Lys265 contributes to the ATP binding site.

Belongs to the class-I aminoacyl-tRNA synthetase family. Monomer. Requires Zn(2+) as cofactor.

The protein resides in the cytoplasm. The enzyme catalyses tRNA(Cys) + L-cysteine + ATP = L-cysteinyl-tRNA(Cys) + AMP + diphosphate. The polypeptide is Cysteine--tRNA ligase (Mesoplasma florum (strain ATCC 33453 / NBRC 100688 / NCTC 11704 / L1) (Acholeplasma florum)).